The primary structure comprises 267 residues: Small ribosomal subunit protein uS3 (267 aa).

Positions 43-111 constitute a KH type-2 domain; the sequence is IRKEMSKDLE…QVQLNIFEVK (69 aa). The tract at residues 216–267 is disordered; it reads FEEQQAQQNNRPGRRGGDRRPRRGNRSAAPQAAEAPKAEAPAEAAPAAETKE. Residues 241 to 267 show a composition bias toward low complexity; sequence RSAAPQAAEAPKAEAPAEAAPAAETKE.

Belongs to the universal ribosomal protein uS3 family. Part of the 30S ribosomal subunit. Forms a tight complex with proteins S10 and S14.

Its function is as follows. Binds the lower part of the 30S subunit head. Binds mRNA in the 70S ribosome, positioning it for translation. The protein is Small ribosomal subunit protein uS3 of Bifidobacterium longum (strain DJO10A).